Reading from the N-terminus, the 165-residue chain is MTDSELMQLSEQVGQALKARGATVTTAESCTGGWVAKVITDIAGSSAWFERGFVTYSNEAKAQMIGVREETLAQHGAVSEPVVVEMAIGALKAARADYAVSISGIAGPDGGSEEKPVGTVWFAFATARGEGITRRECFSGDRDAVRRQATAYALQTLWQQFLQNT.

It belongs to the CinA family. PncC subfamily. As to quaternary structure, homodimer.

The catalysed reaction is beta-nicotinamide D-ribonucleotide + H2O = nicotinate beta-D-ribonucleotide + NH4(+). In terms of biological role, has NMN aminohydrolase activity, not active on other substrates. The chain is Nicotinamide-nucleotide amidohydrolase PncC (pncC) from Escherichia coli O6:H1 (strain CFT073 / ATCC 700928 / UPEC).